Consider the following 95-residue polypeptide: Aspartyl/glutamyl-tRNA(Asn/Gln) amidotransferase subunit C (95 aa).

The protein belongs to the GatC family. Heterotrimer of A, B and C subunits.

The catalysed reaction is L-glutamyl-tRNA(Gln) + L-glutamine + ATP + H2O = L-glutaminyl-tRNA(Gln) + L-glutamate + ADP + phosphate + H(+). It carries out the reaction L-aspartyl-tRNA(Asn) + L-glutamine + ATP + H2O = L-asparaginyl-tRNA(Asn) + L-glutamate + ADP + phosphate + 2 H(+). Allows the formation of correctly charged Asn-tRNA(Asn) or Gln-tRNA(Gln) through the transamidation of misacylated Asp-tRNA(Asn) or Glu-tRNA(Gln) in organisms which lack either or both of asparaginyl-tRNA or glutaminyl-tRNA synthetases. The reaction takes place in the presence of glutamine and ATP through an activated phospho-Asp-tRNA(Asn) or phospho-Glu-tRNA(Gln). The sequence is that of Aspartyl/glutamyl-tRNA(Asn/Gln) amidotransferase subunit C from Gluconacetobacter diazotrophicus (strain ATCC 49037 / DSM 5601 / CCUG 37298 / CIP 103539 / LMG 7603 / PAl5).